The following is a 485-amino-acid chain: Protein nucleotidyltransferase YdiU (485 aa).

ATP-binding residues include Gly-90, Gly-92, Arg-93, Lys-113, Asp-125, Gly-126, Arg-176, and Arg-183. Asp-252 (proton acceptor) is an active-site residue. The Mg(2+) site is built by Asn-253 and Asp-262. Position 262 (Asp-262) interacts with ATP.

Belongs to the SELO family. Mg(2+) serves as cofactor. It depends on Mn(2+) as a cofactor.

The catalysed reaction is L-seryl-[protein] + ATP = 3-O-(5'-adenylyl)-L-seryl-[protein] + diphosphate. The enzyme catalyses L-threonyl-[protein] + ATP = 3-O-(5'-adenylyl)-L-threonyl-[protein] + diphosphate. It catalyses the reaction L-tyrosyl-[protein] + ATP = O-(5'-adenylyl)-L-tyrosyl-[protein] + diphosphate. It carries out the reaction L-histidyl-[protein] + UTP = N(tele)-(5'-uridylyl)-L-histidyl-[protein] + diphosphate. The catalysed reaction is L-seryl-[protein] + UTP = O-(5'-uridylyl)-L-seryl-[protein] + diphosphate. The enzyme catalyses L-tyrosyl-[protein] + UTP = O-(5'-uridylyl)-L-tyrosyl-[protein] + diphosphate. In terms of biological role, nucleotidyltransferase involved in the post-translational modification of proteins. It can catalyze the addition of adenosine monophosphate (AMP) or uridine monophosphate (UMP) to a protein, resulting in modifications known as AMPylation and UMPylation. This Vibrio atlanticus (strain LGP32) (Vibrio splendidus (strain Mel32)) protein is Protein nucleotidyltransferase YdiU.